The primary structure comprises 120 residues: uncharacterized protein (120 aa).

Residues 93 to 109 (LCVGISTTMIIQVLFLL) traverse the membrane as a helical segment.

It is found in the membrane. This is an uncharacterized protein from Saccharomyces cerevisiae (strain ATCC 204508 / S288c) (Baker's yeast).